The chain runs to 697 residues: Pentatricopeptide repeat-containing protein At5g46460, mitochondrial (697 aa).

Residues 1–36 (MWSRAIFQRFRFRAFSISHVIHGKCYRSFSVTVEFQ) constitute a mitochondrion transit peptide. 14 PPR repeats span residues 39–64 (EVLI…VPSP), 65–95 (HVSL…MPVR), 96–130 (DVVS…SVVS), 131–157 (WTAM…MPVK), 158–192 (DTAA…NVIS), 193–223 (WTTM…CIKS), 224–258 (TSRP…GFLY), 259–289 (EEYV…KVHE), 290–324 (QVAV…SILP), 325–359 (NQST…GLET), 360–390 (DAFV…IFKK), 391–425 (SIVS…NKEP), 426–456 (DEIT…MSSG), and 463–497 (KIQH…PNEM). Residues 498 to 573 (VWLALLSACR…KPGSSWVVIR (76 aa)) form a type E motif region. Residues 574–602 (GKKHEFFSGDQPHCSRIYEKLEFLREKLK) form a type E(+) motif region. Residues 603-697 (ELGYAPDYRS…NGTCSCGDYW (95 aa)) form a type DYW motif region.

It belongs to the PPR family. PCMP-H subfamily.

The protein resides in the mitochondrion. This chain is Pentatricopeptide repeat-containing protein At5g46460, mitochondrial (PCMP-H49), found in Arabidopsis thaliana (Mouse-ear cress).